Reading from the N-terminus, the 894-residue chain is Protein SEY1 (894 aa).

A disordered region spans residues 1-64; that stretch reads MGLDVDSVPI…PRALEPAQVT (64 aa). The Cytoplasmic segment spans residues 1–768; that stretch reads MGLDVDSVPI…KRGTVSSMSQ (768 aa). Low complexity predominate over residues 9–24; that stretch reads PIAEAAAPSSMAATEP. Residues 40–53 are compositionally biased toward polar residues; sequence APMNTDSSRETMPT. Positions 137–359 constitute a GB1/RHD3-type G domain; that stretch reads GFGYDICAVL…DESYVFKTEY (223 aa). GTP is bound at residue 147–154; it reads GSQSTGKS. Positions 536-559 form a coiled coil; it reads KVDDERAQLLDELHTLARTLRANE. Residues 769 to 789 traverse the membrane as a helical segment; that stretch reads VPIWMYGVLVVLGWNEAMAVL. Residues 790–792 are Lumenal-facing; the sequence is RNP. A helical transmembrane segment spans residues 793–813; sequence VYFTLLCMVLATAYVIWRLNL. The Cytoplasmic segment spans residues 814-894; it reads GTPVLALASG…DSHPRLPASF (81 aa). The disordered stretch occupies residues 841-894; sequence DGTPPSANRAREYRVPSGSTAHVSEKTPHRPLTTSGAAEADTVEDSHPRLPASF.

Belongs to the TRAFAC class dynamin-like GTPase superfamily. GB1/RHD3 GTPase family. RHD3 subfamily.

The protein localises to the endoplasmic reticulum membrane. Functionally, cooperates with the reticulon proteins and tubule-shaping DP1 family proteins to generate and maintain the structure of the tubular endoplasmic reticulum network. Has GTPase activity, which is required for its function in ER organization. This is Protein SEY1 from Malassezia globosa (strain ATCC MYA-4612 / CBS 7966) (Dandruff-associated fungus).